The chain runs to 787 residues: Ribonucleoside-diphosphate reductase large subunit (787 aa).

Substrate contacts are provided by residues T209, 224-225 (SC), G255, 436-440 (NLCTE), and 618-622 (PTVSS). The cysteines at positions 225 and 453 are disulfide-linked. N436 functions as the Proton acceptor in the catalytic mechanism. The Cysteine radical intermediate role is filled by C438. E440 functions as the Proton acceptor in the catalytic mechanism.

Belongs to the ribonucleoside diphosphate reductase large chain family. Heterotetramer composed of a homodimer of the large subunit (R1) and a homodimer of the small subunit (R2). Larger multisubunit protein complex are also active, composed of (R1)n(R2)n.

The enzyme catalyses a 2'-deoxyribonucleoside 5'-diphosphate + [thioredoxin]-disulfide + H2O = a ribonucleoside 5'-diphosphate + [thioredoxin]-dithiol. In terms of biological role, ribonucleoside-diphosphate reductase holoenzyme provides the precursors necessary for viral DNA synthesis. Allows virus growth in non-dividing cells, as well as reactivation from latency in infected hosts. Catalyzes the biosynthesis of deoxyribonucleotides from the corresponding ribonucleotides. The polypeptide is Ribonucleoside-diphosphate reductase large subunit (Bos taurus (Bovine)).